We begin with the raw amino-acid sequence, 182 residues long: P21 prophage-derived terminase small subunit (182 aa).

Position 31–36 (31–36 (SKGSKG)) interacts with ATP.

Belongs to the terminase small subunit family. Heterooligomer of gp1 and gp2.

Its function is as follows. Involved in the initiation of the phage DNA packaging into the prohead. Processes replicating concatemeric DNA into pieces of unit length with cohesive ends. This is P21 prophage-derived terminase small subunit (nohA) from Escherichia coli O6:H1 (strain CFT073 / ATCC 700928 / UPEC).